The following is a 405-amino-acid chain: Cysteine desulfurase IscS (405 aa).

Residues 75–76 (AT), Asn156, Gln184, and 204–206 (SAH) contribute to the pyridoxal 5'-phosphate site. Position 207 is an N6-(pyridoxal phosphate)lysine (Lys207). A pyridoxal 5'-phosphate-binding site is contributed by Thr244. The active-site Cysteine persulfide intermediate is Cys329. Cys329 serves as a coordination point for [2Fe-2S] cluster.

The protein belongs to the class-V pyridoxal-phosphate-dependent aminotransferase family. NifS/IscS subfamily. As to quaternary structure, homodimer. Forms a heterotetramer with IscU, interacts with other sulfur acceptors. The cofactor is pyridoxal 5'-phosphate.

Its subcellular location is the cytoplasm. It catalyses the reaction (sulfur carrier)-H + L-cysteine = (sulfur carrier)-SH + L-alanine. It participates in cofactor biosynthesis; iron-sulfur cluster biosynthesis. Its function is as follows. Master enzyme that delivers sulfur to a number of partners involved in Fe-S cluster assembly, tRNA modification or cofactor biosynthesis. Catalyzes the removal of elemental sulfur atoms from cysteine to produce alanine. Functions as a sulfur delivery protein for Fe-S cluster synthesis onto IscU, an Fe-S scaffold assembly protein, as well as other S acceptor proteins. The polypeptide is Cysteine desulfurase IscS (Methylobacillus flagellatus (strain ATCC 51484 / DSM 6875 / VKM B-1610 / KT)).